The chain runs to 412 residues: Serine hydroxymethyltransferase (412 aa).

Residues leucine 117 and glycine 121–leucine 123 contribute to the (6S)-5,6,7,8-tetrahydrofolate site. The residue at position 226 (lysine 226) is an N6-(pyridoxal phosphate)lysine.

It belongs to the SHMT family. Homodimer. Requires pyridoxal 5'-phosphate as cofactor.

It is found in the cytoplasm. It catalyses the reaction (6R)-5,10-methylene-5,6,7,8-tetrahydrofolate + glycine + H2O = (6S)-5,6,7,8-tetrahydrofolate + L-serine. It functions in the pathway one-carbon metabolism; tetrahydrofolate interconversion. It participates in amino-acid biosynthesis; glycine biosynthesis; glycine from L-serine: step 1/1. Catalyzes the reversible interconversion of serine and glycine with tetrahydrofolate (THF) serving as the one-carbon carrier. This reaction serves as the major source of one-carbon groups required for the biosynthesis of purines, thymidylate, methionine, and other important biomolecules. Also exhibits THF-independent aldolase activity toward beta-hydroxyamino acids, producing glycine and aldehydes, via a retro-aldol mechanism. The protein is Serine hydroxymethyltransferase of Staphylococcus aureus (strain USA300).